Reading from the N-terminus, the 699-residue chain is MNPIVKSFEYGQHTVTLETGVIARQADAAVLASMGDTTVLVTVVGKKEAEAGRDFFPLTVNYQEKTYAAGKIPGGFFKREGRPSEEETLIARLIDRPIRPLFPNGFKNEVQVIITVVSVDPEIEPDIISMIGTSAALAISGIPFNGPLGAARVGYINGEYVLNPTVKQIGASQLNLVVAGTESAVLMVESEAQALPEEVMLGSVVYGHDQQQVVIKAIAEFKAEAGKPTWDWTAPVEDEALVAQIKELAEAGFIEAYQIQVKQERYAQVAVVKAAAKEALLAANPDVDLREVDNLLGSLEKKVVRGRILRGMPRIDGREPDMVRALSVLAGVLPRTHGSALFTRGETQALVTCTLGTERDAQKIDSIMGERTNRFMLHYNFPPYSVGETGMVGSPKRREIGHGKLAWRGINAVMPSAEEFPYSVRVVSEITESNGSSSMASVCGTSLALMDAGVPIKTSVAGIAMGLVKEGDDFVVLSDILGDEDHLGDMDFKVAGTRDGVTALQMDIKIEGITKEIMEIALQQAYGARVHILNVMDQAIGSHRADISDHAPRITTIKINPEKIRDVIGKGGAVIRALTEETGTTIELEDDGTVKIASSNGEATKEAIRRIEEITSEVEVGRIYNGKVIRIVDFGAFVNILPGKDGLVHISQISDERVANVSDHLELNQEVTVKVMEVDRQGRVRLSIKEAQTKEPAAE.

The Mg(2+) site is built by Asp-485 and Asp-491. The 60-residue stretch at 552–611 (PRITTIKINPEKIRDVIGKGGAVIRALTEETGTTIELEDDGTVKIASSNGEATKEAIRRI) folds into the KH domain. The S1 motif domain occupies 621–689 (GRIYNGKVIR…RQGRVRLSIK (69 aa)).

Belongs to the polyribonucleotide nucleotidyltransferase family. In terms of assembly, component of the RNA degradosome, which is a multiprotein complex involved in RNA processing and mRNA degradation. The cofactor is Mg(2+).

Its subcellular location is the cytoplasm. It catalyses the reaction RNA(n+1) + phosphate = RNA(n) + a ribonucleoside 5'-diphosphate. In terms of biological role, involved in mRNA degradation. Catalyzes the phosphorolysis of single-stranded polyribonucleotides processively in the 3'- to 5'-direction. The chain is Polyribonucleotide nucleotidyltransferase from Shewanella oneidensis (strain ATCC 700550 / JCM 31522 / CIP 106686 / LMG 19005 / NCIMB 14063 / MR-1).